The chain runs to 294 residues: 4-hydroxy-tetrahydrodipicolinate synthase (294 aa).

Thr-45 is a pyruvate binding site. The active-site Proton donor/acceptor is Tyr-133. The Schiff-base intermediate with substrate role is filled by Lys-161. Ile-203 is a binding site for pyruvate.

The protein belongs to the DapA family. As to quaternary structure, homotetramer; dimer of dimers.

It localises to the cytoplasm. The catalysed reaction is L-aspartate 4-semialdehyde + pyruvate = (2S,4S)-4-hydroxy-2,3,4,5-tetrahydrodipicolinate + H2O + H(+). Its pathway is amino-acid biosynthesis; L-lysine biosynthesis via DAP pathway; (S)-tetrahydrodipicolinate from L-aspartate: step 3/4. Functionally, catalyzes the condensation of (S)-aspartate-beta-semialdehyde [(S)-ASA] and pyruvate to 4-hydroxy-tetrahydrodipicolinate (HTPA). The protein is 4-hydroxy-tetrahydrodipicolinate synthase of Shewanella sp. (strain MR-4).